We begin with the raw amino-acid sequence, 304 residues long: Transmembrane protein 178A (304 aa).

Positions 1–25 (MESRGLVTAVSLTLSICSLLLLVTA) are cleaved as a signal peptide. Over 26–186 (IFTDHWYETD…LLHLRRITAG (161 aa)) the chain is Extracellular. Asn-165 is a glycosylation site (N-linked (GlcNAc...) asparagine). A helical membrane pass occupies residues 187-207 (FLGMAAAVLLCGCIVAAISFF). Over 208–215 (WEESLTQH) the chain is Cytoplasmic. A helical transmembrane segment spans residues 216–236 (VAGLLFLMTGIFCTISLCTYA). Residues 237 to 267 (ASVAYELNRQPKFIYGLPSDVEHGYSWSLFC) lie on the Extracellular side of the membrane. The helical transmembrane segment at 268-288 (AWCSLGLIVAAGCLCTAYPFI) threads the bilayer. Over 289–304 (SRTKILHLKFARDSCV) the chain is Cytoplasmic.

This sequence belongs to the TMEM178 family.

It is found in the endoplasmic reticulum membrane. May act as a negative regulator of osteoclast differentiation. The polypeptide is Transmembrane protein 178A (tmem178a) (Xenopus laevis (African clawed frog)).